The following is a 403-amino-acid chain: Aminomethyltransferase, mitochondrial (403 aa).

The transit peptide at 1-28 (MQRAVSVVARLGFRLQAFPPALCRPLSC) directs the protein to the mitochondrion. Positions 232, 261, and 399 each coordinate substrate.

Belongs to the GcvT family. In terms of assembly, the glycine cleavage system is composed of four proteins: P, T, L and H.

Its subcellular location is the mitochondrion. The catalysed reaction is N(6)-[(R)-S(8)-aminomethyldihydrolipoyl]-L-lysyl-[protein] + (6S)-5,6,7,8-tetrahydrofolate = N(6)-[(R)-dihydrolipoyl]-L-lysyl-[protein] + (6R)-5,10-methylene-5,6,7,8-tetrahydrofolate + NH4(+). In terms of biological role, the glycine cleavage system catalyzes the degradation of glycine. The sequence is that of Aminomethyltransferase, mitochondrial from Homo sapiens (Human).